A 207-amino-acid chain; its full sequence is Large ribosomal subunit protein uL4 (207 aa).

A disordered region spans residues 47–77 (GTADTKTRAEVSGGGRKPWRQKGTGRARHGS). Basic residues predominate over residues 63-77 (KPWRQKGTGRARHGS).

Belongs to the universal ribosomal protein uL4 family. Part of the 50S ribosomal subunit.

Its function is as follows. One of the primary rRNA binding proteins, this protein initially binds near the 5'-end of the 23S rRNA. It is important during the early stages of 50S assembly. It makes multiple contacts with different domains of the 23S rRNA in the assembled 50S subunit and ribosome. Functionally, forms part of the polypeptide exit tunnel. This Symbiobacterium thermophilum (strain DSM 24528 / JCM 14929 / IAM 14863 / T) protein is Large ribosomal subunit protein uL4.